A 146-amino-acid polypeptide reads, in one-letter code: uncharacterized protein (146 aa).

Disordered stretches follow at residues 1 to 33 and 50 to 70; these read MATF…GSYR and QHWR…SWEG.

This is an uncharacterized protein from Homo sapiens (Human).